A 1470-amino-acid polypeptide reads, in one-letter code: Calmodulin-regulated spectrin-associated protein 2 (1470 aa).

The 114-residue stretch at 222–335 (WKLVPARYRK…FMAELFWWFE (114 aa)) folds into the Calponin-homology (CH) domain. Residues 374 to 397 (SSSSSDFTSRYTRPQTHSSVSGGI) form a disordered region. A compositionally biased stretch (polar residues) spans 380-390 (FTSRYTRPQTH). Ser-402 and Ser-404 each carry phosphoserine. Position 412 is a phosphothreonine (Thr-412). Ser-450, Ser-581, Ser-582, Ser-594, and Ser-656 each carry phosphoserine. Disordered stretches follow at residues 580–622 (QSSP…EDSS) and 648–712 (ASNP…EGSE). At Thr-661 the chain carries Phosphothreonine. Ser-663 carries the phosphoserine modification. A compositionally biased stretch (low complexity) spans 663–682 (STKSQPGSSASSSSGVKMTS). Basic and acidic residues predominate over residues 686–696 (QKFRKLNHTDG). The stretch at 739–776 (LLASEMVHLRMRLEEKRRAIEAQKKKMEAAFTKQRQKM) forms a coiled coil. Positions 796–835 (REEAAGAEDEKVYTDRAKEKESQKMDGQRSKSLADIKESM) are enriched in basic and acidic residues. A disordered region spans residues 796-864 (REEAAGAEDE…QWNLTSPSEE (69 aa)). Ser-845 carries the post-translational modification Phosphoserine. The stretch at 870 to 909 (ELLEYTKSIEKLNSSLHFLQQEMQRLSLQQEMLMQMREQQ) forms a coiled coil. The tract at residues 905-1016 (MREQQSWVIS…IQTRSFVCFG (112 aa)) is MBD region. Residues Ser-914 and Ser-919 each carry the phosphoserine modification. Disordered stretches follow at residues 930–1059 (RQAG…PLES) and 1078–1099 (NEDQ…PTAP). A compositionally biased stretch (low complexity) spans 935–946 (SSAAAPFSADSP). Positions 952–971 (SPQSSTRKSASFSVKNQRTP) are enriched in polar residues. Phosphothreonine is present on residues Thr-979, Thr-984, and Thr-986. Residues Ser-990 and Ser-1001 each carry the phosphoserine modification. Over residues 1001-1011 (SPSQVPIQTRS) the composition is skewed to polar residues. Composition is skewed to basic and acidic residues over residues 1020–1037 (EPQK…EPSE) and 1044–1056 (SCDH…EVKP). A compositionally biased stretch (pro residues) spans 1086-1098 (TDPPPKPVFPPTA). Ser-1129 carries the phosphoserine modification. A coiled-coil region spans residues 1147–1219 (KDDQKAENDM…REFIRQEYMR (73 aa)). Residues 1167–1233 (RLRREKETQL…KLMEDMDTVI (67 aa)) are compositionally biased toward basic and acidic residues. A disordered region spans residues 1167 to 1327 (RLRREKETQL…TTSSVASGTE (161 aa)). The segment covering 1268 to 1280 (SSLSLASLNTGDT) has biased composition (polar residues). A phosphoserine mark is found at Ser-1294, Ser-1300, and Ser-1302. Residues 1315-1327 (NASTTSSVASGTE) are compositionally biased toward polar residues. Positions 1330-1464 (GPKLYKEPSA…QTKRPVTPKK (135 aa)) constitute a CKK domain.

Belongs to the CAMSAP1 family. Interacts with CAMSAP3. Interacts with KATNA1 and KATNB1; leading to regulate the length of CAMSAP2-decorated microtubule stretches. Interacts with a complex formed by AKAP9 and PDE4DIP; this interaction, which is PDE4DIP isoform-specific, recruits CAMSAP2 to the Golgi. Interacts with MAPRE1/EB1. In terms of tissue distribution, present in the soma, axon, and dendritic shaft of hippocampal neurons (at protein level).

Its subcellular location is the cytoplasm. The protein localises to the cytoskeleton. It localises to the golgi apparatus. It is found in the cilium basal body. Key microtubule-organizing protein that specifically binds the minus-end of non-centrosomal microtubules and regulates their dynamics and organization. Specifically recognizes growing microtubule minus-ends and autonomously decorates and stabilizes microtubule lattice formed by microtubule minus-end polymerization. Acts on free microtubule minus-ends that are not capped by microtubule-nucleating proteins or other factors and protects microtubule minus-ends from depolymerization. In addition, it also reduces the velocity of microtubule polymerization. Through the microtubule cytoskeleton, also regulates the organization of cellular organelles including the Golgi and the early endosomes. Essential for the tethering, but not for nucleation of non-centrosomal microtubules at the Golgi: together with Golgi-associated proteins AKAP9 and PDE4DIP, required to tether non-centrosomal minus-end microtubules to the Golgi, an important step for polarized cell movement. Also acts as a regulator of neuronal polarity and development: localizes to non-centrosomal microtubule minus-ends in neurons and stabilizes non-centrosomal microtubules, which is required for neuronal polarity, axon specification and dendritic branch formation. Through the microtubule cytoskeleton, regulates the autophagosome transport. The chain is Calmodulin-regulated spectrin-associated protein 2 from Rattus norvegicus (Rat).